Reading from the N-terminus, the 573-residue chain is Phosphomethylpyrimidine synthase (573 aa).

Substrate is bound by residues Asn-190, Met-219, Tyr-248, His-284, 304 to 306, 345 to 348, and Glu-384; these read SRG and DGLR. His-388 is a binding site for Zn(2+). Residue Tyr-411 coordinates substrate. His-452 is a binding site for Zn(2+). [4Fe-4S] cluster contacts are provided by Cys-532, Cys-535, and Cys-540.

This sequence belongs to the ThiC family. It depends on [4Fe-4S] cluster as a cofactor.

It catalyses the reaction 5-amino-1-(5-phospho-beta-D-ribosyl)imidazole + S-adenosyl-L-methionine = 4-amino-2-methyl-5-(phosphooxymethyl)pyrimidine + CO + 5'-deoxyadenosine + formate + L-methionine + 3 H(+). It participates in cofactor biosynthesis; thiamine diphosphate biosynthesis. Its function is as follows. Catalyzes the synthesis of the hydroxymethylpyrimidine phosphate (HMP-P) moiety of thiamine from aminoimidazole ribotide (AIR) in a radical S-adenosyl-L-methionine (SAM)-dependent reaction. This Geobacillus sp. (strain WCH70) protein is Phosphomethylpyrimidine synthase.